A 104-amino-acid polypeptide reads, in one-letter code: Large ribosomal subunit protein uL24 (104 aa).

It belongs to the universal ribosomal protein uL24 family. Part of the 50S ribosomal subunit.

Its function is as follows. One of two assembly initiator proteins, it binds directly to the 5'-end of the 23S rRNA, where it nucleates assembly of the 50S subunit. One of the proteins that surrounds the polypeptide exit tunnel on the outside of the subunit. This Yersinia enterocolitica serotype O:8 / biotype 1B (strain NCTC 13174 / 8081) protein is Large ribosomal subunit protein uL24.